A 212-amino-acid polypeptide reads, in one-letter code: Putative tyrosine-protein phosphatase OCA1 (212 aa).

The disordered stretch occupies residues 1–27 (MSNKDTSILKGNVDHEEADSNPKLRKI). Residues 12 to 22 (NVDHEEADSNP) are compositionally biased toward basic and acidic residues. The region spanning 40 to 208 (NFCPVERQLY…SVEIDPSKVP (169 aa)) is the Tyrosine-protein phosphatase domain. Cysteine 146 functions as the Phosphocysteine intermediate in the catalytic mechanism.

It belongs to the protein-tyrosine phosphatase family.

Its subcellular location is the cytoplasm. It catalyses the reaction O-phospho-L-tyrosyl-[protein] + H2O = L-tyrosyl-[protein] + phosphate. Functionally, putative tyrosine-protein phosphatase required for protection against superoxide stress. The polypeptide is Putative tyrosine-protein phosphatase OCA1 (OCA1) (Scheffersomyces stipitis (strain ATCC 58785 / CBS 6054 / NBRC 10063 / NRRL Y-11545) (Yeast)).